A 964-amino-acid polypeptide reads, in one-letter code: Protein translocase subunit SecA (964 aa).

ATP-binding positions include Gln-86, 104 to 108, and Asp-494; that span reads GEGKT. The interval 848–964 is disordered; the sequence is AESADTIAVA…YKMCHGQNEK (117 aa). The span at 871-882 shows a compositional bias: acidic residues; sequence AEGEVEEEDEDT. Positions 889 to 900 are enriched in low complexity; the sequence is AESAAASGAGES. Cys-947, Cys-949, Cys-958, and His-959 together coordinate Zn(2+).

The protein belongs to the SecA family. As to quaternary structure, monomer and homodimer. Part of the essential Sec protein translocation apparatus which comprises SecA, SecYEG and auxiliary proteins SecDF. Other proteins may also be involved. The cofactor is Zn(2+).

The protein localises to the cell membrane. The protein resides in the cytoplasm. The enzyme catalyses ATP + H2O + cellular proteinSide 1 = ADP + phosphate + cellular proteinSide 2.. Part of the Sec protein translocase complex. Interacts with the SecYEG preprotein conducting channel. Has a central role in coupling the hydrolysis of ATP to the transfer of proteins into and across the cell membrane, serving as an ATP-driven molecular motor driving the stepwise translocation of polypeptide chains across the membrane. This Bifidobacterium longum (strain NCC 2705) protein is Protein translocase subunit SecA.